Reading from the N-terminus, the 353-residue chain is Photosystem II protein D1 (353 aa).

At Thr-2 the chain carries N-acetylthreonine. Phosphothreonine is present on Thr-2. The next 3 helical transmembrane spans lie at 29–46 (YIGWFGVLMIPTLLTATS), 118–133 (HFLLGVACYMGREWEL), and 142–156 (WIAVAYSAPVAAATA). His-118 is a chlorophyll a binding site. Residue Tyr-126 coordinates pheophytin a. [CaMn4O5] cluster-binding residues include Asp-170 and Glu-189. A helical membrane pass occupies residues 197–218 (FHMLGVAGVFGGSLFSAMHGSL). His-198 contributes to the chlorophyll a binding site. Residues His-215 and 264 to 265 (SF) contribute to the a quinone site. His-215 lines the Fe cation pocket. His-272 is a binding site for Fe cation. Residues 274-288 (FLAAWPVVGIWFTAL) traverse the membrane as a helical segment. [CaMn4O5] cluster-binding residues include His-332, Glu-333, Asp-342, and Ala-344. The propeptide occupies 345–353 (AVEAPSTNG).

This sequence belongs to the reaction center PufL/M/PsbA/D family. PSII is composed of 1 copy each of membrane proteins PsbA, PsbB, PsbC, PsbD, PsbE, PsbF, PsbH, PsbI, PsbJ, PsbK, PsbL, PsbM, PsbT, PsbX, PsbY, PsbZ, Psb30/Ycf12, at least 3 peripheral proteins of the oxygen-evolving complex and a large number of cofactors. It forms dimeric complexes. The cofactor is The D1/D2 heterodimer binds P680, chlorophylls that are the primary electron donor of PSII, and subsequent electron acceptors. It shares a non-heme iron and each subunit binds pheophytin, quinone, additional chlorophylls, carotenoids and lipids. D1 provides most of the ligands for the Mn4-Ca-O5 cluster of the oxygen-evolving complex (OEC). There is also a Cl(-1) ion associated with D1 and D2, which is required for oxygen evolution. The PSII complex binds additional chlorophylls, carotenoids and specific lipids.. Post-translationally, tyr-161 forms a radical intermediate that is referred to as redox-active TyrZ, YZ or Y-Z. C-terminally processed by CTPA; processing is essential to allow assembly of the oxygen-evolving complex and thus photosynthetic growth.

Its subcellular location is the plastid. The protein resides in the chloroplast thylakoid membrane. The catalysed reaction is 2 a plastoquinone + 4 hnu + 2 H2O = 2 a plastoquinol + O2. Photosystem II (PSII) is a light-driven water:plastoquinone oxidoreductase that uses light energy to abstract electrons from H(2)O, generating O(2) and a proton gradient subsequently used for ATP formation. It consists of a core antenna complex that captures photons, and an electron transfer chain that converts photonic excitation into a charge separation. The D1/D2 (PsbA/PsbD) reaction center heterodimer binds P680, the primary electron donor of PSII as well as several subsequent electron acceptors. The chain is Photosystem II protein D1 from Lepidium virginicum (Virginia pepperweed).